The following is a 243-amino-acid chain: Ribosomal RNA small subunit methyltransferase J (243 aa).

Residues 112–113 and D164 each bind S-adenosyl-L-methionine; that span reads ER.

Belongs to the methyltransferase superfamily. RsmJ family.

It localises to the cytoplasm. The catalysed reaction is guanosine(1516) in 16S rRNA + S-adenosyl-L-methionine = N(2)-methylguanosine(1516) in 16S rRNA + S-adenosyl-L-homocysteine + H(+). Functionally, specifically methylates the guanosine in position 1516 of 16S rRNA. The sequence is that of Ribosomal RNA small subunit methyltransferase J from Legionella pneumophila (strain Corby).